The primary structure comprises 436 residues: 3-ketoacyl-CoA thiolase (436 aa).

Residue cysteine 99 is the Acyl-thioester intermediate of the active site. Catalysis depends on proton acceptor residues histidine 392 and cysteine 422.

The protein belongs to the thiolase-like superfamily. Thiolase family. As to quaternary structure, heterotetramer of two alpha chains (FadJ) and two beta chains (FadI).

The protein resides in the cytoplasm. It catalyses the reaction an acyl-CoA + acetyl-CoA = a 3-oxoacyl-CoA + CoA. It functions in the pathway lipid metabolism; fatty acid beta-oxidation. Its function is as follows. Catalyzes the final step of fatty acid oxidation in which acetyl-CoA is released and the CoA ester of a fatty acid two carbons shorter is formed. The sequence is that of 3-ketoacyl-CoA thiolase from Escherichia coli O127:H6 (strain E2348/69 / EPEC).